The primary structure comprises 201 residues: MSRYRGPRFKKIRRLGALPGLTSKRPRAGSDLRNQSRSGKKSQYRIRLEEKQKLRFHYGLTERQLLKYVRIAGKAKGSTGQVLLQLLEMRLDNTLFRLGMALTIPQARQLVNHGHILVNGRIVDIPSYRCKPRDIITVKDEQNSRTLVQNLLDSSAPEELPKHLTLHTFQYEGLVNQIIDRKCVGLKINELLVVEYYSRQT.

The interval 20-44 is disordered; the sequence is GLTSKRPRAGSDLRNQSRSGKKSQY. The 64-residue stretch at 89–152 folds into the S4 RNA-binding domain; the sequence is MRLDNTLFRL…NSRTLVQNLL (64 aa).

This sequence belongs to the universal ribosomal protein uS4 family. Part of the 30S ribosomal subunit. Contacts protein S5. The interaction surface between S4 and S5 is involved in control of translational fidelity.

The protein localises to the plastid. The protein resides in the chloroplast. One of the primary rRNA binding proteins, it binds directly to 16S rRNA where it nucleates assembly of the body of the 30S subunit. In terms of biological role, with S5 and S12 plays an important role in translational accuracy. In Aethionema grandiflorum (Persian stone-cress), this protein is Small ribosomal subunit protein uS4c (rps4).